A 35-amino-acid polypeptide reads, in one-letter code: Small toxic polypeptide LdrB (35 aa).

A helical transmembrane segment spans residues 10 to 30; that stretch reads FWHDLAAPILAGIITAAIVGW.

It belongs to the Ldr toxic peptide family.

The protein resides in the cell inner membrane. Toxic component of a type I toxin-antitoxin (TA) system. Overexpression causes rapid cell killing, probably by disrupting the cell inner membrane and disruption of ATP synthesis. The protein is Small toxic polypeptide LdrB (ldrB) of Escherichia coli (strain K12).